We begin with the raw amino-acid sequence, 45 residues long: Cytochrome b559 subunit beta (45 aa).

Residues 20–36 (WIAVHTLAVPTVFFLGA) traverse the membrane as a helical segment. H24 contacts heme.

The protein belongs to the PsbE/PsbF family. Heterodimer of an alpha subunit and a beta subunit. PSII is composed of 1 copy each of membrane proteins PsbA, PsbB, PsbC, PsbD, PsbE, PsbF, PsbH, PsbI, PsbJ, PsbK, PsbL, PsbM, PsbT, PsbX, PsbY, PsbZ, Psb30/Ycf12, peripheral proteins PsbO, CyanoQ (PsbQ), PsbU, PsbV and a large number of cofactors. It forms dimeric complexes. Heme b is required as a cofactor.

It is found in the cellular thylakoid membrane. This b-type cytochrome is tightly associated with the reaction center of photosystem II (PSII). PSII is a light-driven water:plastoquinone oxidoreductase that uses light energy to abstract electrons from H(2)O, generating O(2) and a proton gradient subsequently used for ATP formation. It consists of a core antenna complex that captures photons, and an electron transfer chain that converts photonic excitation into a charge separation. The sequence is that of Cytochrome b559 subunit beta from Nostoc sp. (strain PCC 7120 / SAG 25.82 / UTEX 2576).